We begin with the raw amino-acid sequence, 416 residues long: N-acetyl-L-cysteine deacetylase (416 aa).

The Zn(2+) site is built by Cys128, His130, Glu164, His188, and His380.

It belongs to the peptidase M20 family. It depends on Zn(2+) as a cofactor. Co(2+) is required as a cofactor.

It carries out the reaction N-acetyl-L-cysteine + H2O = L-cysteine + acetate. It functions in the pathway amino-acid metabolism. Its function is as follows. Involved in a cysteine salvage pathway from S-alkylcysteine. Catalyzes the last step in this pathway, i.e. the deacetylation of N-acetyl-L-cysteine. This pathway is likely important in the catabolism of alkylated cysteine generated by proteolysis of alkylated glutathione formed in the detoxification of a wide range of electrophiles. This chain is N-acetyl-L-cysteine deacetylase, found in Bacillus subtilis (strain 168).